A 394-amino-acid polypeptide reads, in one-letter code: Elongation factor Tu 1 (394 aa).

The 195-residue stretch at 10-204 (KPHVNVGTIG…YLDSYIPEPE (195 aa)) folds into the tr-type G domain. The interval 19 to 26 (GHVDHGKT) is G1. 19–26 (GHVDHGKT) provides a ligand contact to GTP. Residue threonine 26 participates in Mg(2+) binding. Residues 60-64 (GITIN) are G2. Residues 81 to 84 (DCPG) are G3. GTP is bound by residues 81-85 (DCPGH) and 136-139 (NKCD). The G4 stretch occupies residues 136–139 (NKCD). Residues 174 to 176 (SAL) form a G5 region.

The protein belongs to the TRAFAC class translation factor GTPase superfamily. Classic translation factor GTPase family. EF-Tu/EF-1A subfamily. In terms of assembly, monomer.

It localises to the cytoplasm. It carries out the reaction GTP + H2O = GDP + phosphate + H(+). Its function is as follows. GTP hydrolase that promotes the GTP-dependent binding of aminoacyl-tRNA to the A-site of ribosomes during protein biosynthesis. This chain is Elongation factor Tu 1, found in Serratia proteamaculans (strain 568).